The following is a 126-amino-acid chain: C-X-C motif chemokine 9 (126 aa).

Residues methionine 1–glycine 21 form the signal peptide. 2 disulfide bridges follow: cysteine 30/cysteine 57 and cysteine 32/cysteine 73. N-linked (GlcNAc...) asparagine glycosylation is present at asparagine 58. The segment at lysine 91 to threonine 126 is disordered. Positions serine 93–threonine 126 are enriched in basic residues.

The protein belongs to the intercrine alpha (chemokine CxC) family.

It localises to the secreted. Functionally, may be a cytokine that affects the growth, movement, or activation state of cells that participate in immune and inflammatory response. This is C-X-C motif chemokine 9 (Cxcl9) from Mus musculus (Mouse).